A 212-amino-acid chain; its full sequence is ATP-dependent dethiobiotin synthetase BioD (212 aa).

13–18 is an ATP binding site; sequence GIGKTV. Threonine 17 contacts Mg(2+). Residue lysine 33 is part of the active site. Serine 37 contacts substrate. Mg(2+) is bound at residue glutamate 100. ATP is bound by residues 100 to 103 and 184 to 186; these read EGAG and PLL.

Belongs to the dethiobiotin synthetase family. Homodimer. Requires Mg(2+) as cofactor.

It is found in the cytoplasm. It catalyses the reaction (7R,8S)-7,8-diammoniononanoate + CO2 + ATP = (4R,5S)-dethiobiotin + ADP + phosphate + 3 H(+). Its pathway is cofactor biosynthesis; biotin biosynthesis; biotin from 7,8-diaminononanoate: step 1/2. Its function is as follows. Catalyzes a mechanistically unusual reaction, the ATP-dependent insertion of CO2 between the N7 and N8 nitrogen atoms of 7,8-diaminopelargonic acid (DAPA, also called 7,8-diammoniononanoate) to form a ureido ring. The chain is ATP-dependent dethiobiotin synthetase BioD from Brucella melitensis biotype 2 (strain ATCC 23457).